A 144-amino-acid polypeptide reads, in one-letter code: Superoxide dismutase [Mn], mitochondrial (144 aa).

3 residues coordinate Mn(2+): histidine 10, histidine 58, and aspartate 143.

This sequence belongs to the iron/manganese superoxide dismutase family. Homotetramer. It depends on Mn(2+) as a cofactor.

It localises to the mitochondrion matrix. It carries out the reaction 2 superoxide + 2 H(+) = H2O2 + O2. Its function is as follows. Destroys superoxide anion radicals which are normally produced within the cells and which are toxic to biological systems. The sequence is that of Superoxide dismutase [Mn], mitochondrial from Palinurus vulgaris (European spiny lobster).